The chain runs to 629 residues: Probable potassium transport system protein Kup 3 (629 aa).

12 helical membrane passes run 20 to 40 (LSLS…LYTF), 61 to 81 (VSLI…SFAL), 106 to 126 (PFII…GTIT), 143 to 163 (PSLK…LFAI), 171 to 191 (IGKA…ILGA), 212 to 232 (FLFS…LCVT), 253 to 273 (WFGL…ALVL), 291 to 311 (FLLP…QAII), 343 to 363 (IYIG…TIGF), 372 to 392 (AYGI…FIAL), 400 to 420 (IITS…FFAA), and 425 to 445 (FING…MMYI).

Belongs to the HAK/KUP transporter (TC 2.A.72) family.

The protein localises to the cell inner membrane. The catalysed reaction is K(+)(in) + H(+)(in) = K(+)(out) + H(+)(out). Functionally, transport of potassium into the cell. Likely operates as a K(+):H(+) symporter. This chain is Probable potassium transport system protein Kup 3, found in Legionella pneumophila (strain Lens).